We begin with the raw amino-acid sequence, 693 residues long: Probable L-type lectin-domain containing receptor kinase VI.1 (693 aa).

The first 22 residues, 1-22, serve as a signal peptide directing secretion; that stretch reads MGIARSINSFMFFFFLMILSNA. 7 N-linked (GlcNAc...) asparagine glycosylation sites follow: Asn-21, Asn-44, Asn-71, Asn-89, Asn-141, Asn-180, and Asn-223. Residues 23–311 are Extracellular-facing; it reads SKSSVLAEAT…SNKKGYNSQV (289 aa). The interval 33–279 is legume-lectin like; the sequence is TAKFTFIGFK…AHYVMGWSFS (247 aa). A helical membrane pass occupies residues 312–332; sequence IVLIVALSIVTLVLLVLLFIF. Over 333 to 693 the chain is Cytoplasmic; it reads VMYKRRIQEE…VSSSSIVSGR (361 aa). The Protein kinase domain occupies 368 to 642; it reads FKESEIIGTG…LRYLNGEENV (275 aa). ATP contacts are provided by residues 374-382 and Lys-396; that span reads IGTGGFGIV. The active-site Proton acceptor is the Asp-495. Positions 670 to 693 are disordered; it reads DRASSSNTFSSFSNVSSSSIVSGR.

This sequence in the C-terminal section; belongs to the protein kinase superfamily. Ser/Thr protein kinase family. In the N-terminal section; belongs to the leguminous lectin family.

It is found in the cell membrane. The enzyme catalyses L-seryl-[protein] + ATP = O-phospho-L-seryl-[protein] + ADP + H(+). The catalysed reaction is L-threonyl-[protein] + ATP = O-phospho-L-threonyl-[protein] + ADP + H(+). This is Probable L-type lectin-domain containing receptor kinase VI.1 (LECRK61) from Arabidopsis thaliana (Mouse-ear cress).